We begin with the raw amino-acid sequence, 162 residues long: MNDRELDLTEEQKALKAKYPPITKKYEYLDHTADVQIHSWGNSLEEAFEQCAMGMFGYMTDTETVEPIDTVEVESEGDDMESLLYHFLDDWLFKFSADIFFIPREVKVLHIDRMRYKIRSIGWGEEFSINKHPQGTEVKAITYSAMQIHETEQPEIFVIIDI.

Residues Asp-34, Asp-161, and Ile-162 each contribute to the Ca(2+) site.

It belongs to the archease family. Component of the tRNA-splicing ligase complex.

Its function is as follows. Component of the tRNA-splicing ligase complex required to facilitate the enzymatic turnover of catalytic subunit RTCB. Together with ddx1, acts by facilitating the guanylylation of RTCB, a key intermediate step in tRNA ligation. The protein is Protein archease (zbtb8os) of Danio rerio (Zebrafish).